Here is a 102-residue protein sequence, read N- to C-terminus: Small ribosomal subunit protein uS10 (102 aa).

Belongs to the universal ribosomal protein uS10 family. As to quaternary structure, part of the 30S ribosomal subunit.

In terms of biological role, involved in the binding of tRNA to the ribosomes. The polypeptide is Small ribosomal subunit protein uS10 (Clostridium beijerinckii (strain ATCC 51743 / NCIMB 8052) (Clostridium acetobutylicum)).